The following is a 552-amino-acid chain: Urocanate hydratase (552 aa).

NAD(+)-binding positions include 48 to 49 (GG), Gln-126, 172 to 174 (GMG), Glu-192, Arg-197, 238 to 239 (NA), 259 to 263 (QTSAH), 269 to 270 (YV), and Tyr-318. Cys-406 is a catalytic residue. An NAD(+)-binding site is contributed by Gly-488.

The protein belongs to the urocanase family. Requires NAD(+) as cofactor.

The protein localises to the cytoplasm. It catalyses the reaction 4-imidazolone-5-propanoate = trans-urocanate + H2O. The protein operates within amino-acid degradation; L-histidine degradation into L-glutamate; N-formimidoyl-L-glutamate from L-histidine: step 2/3. Functionally, catalyzes the conversion of urocanate to 4-imidazolone-5-propionate. The sequence is that of Urocanate hydratase from Herpetosiphon aurantiacus (strain ATCC 23779 / DSM 785 / 114-95).